Reading from the N-terminus, the 1329-residue chain is BRCT domain-containing protein At4g02110 (1329 aa).

2 BRCT domains span residues Leu7–Tyr97 and Asn104–Ile194. Disordered stretches follow at residues Ala295–Arg378, Gly393–Leu470, Glu576–Asp645, Asn745–Lys827, and Ala952–Lys1077. 2 stretches are compositionally biased toward polar residues: residues Ser323–Ser335 and Ser363–Arg378. Composition is skewed to basic and acidic residues over residues Val410–Ser422 and Arg600–Thr611. Residues Gly793–Ile802 are compositionally biased toward basic residues. 2 stretches are compositionally biased toward basic and acidic residues: residues Asp818–Lys827 and Asp971–Val983. Positions Ser986–Ser1004 are enriched in low complexity. Over residues Val1024–Lys1047 the composition is skewed to basic and acidic residues. Residues Phe1090–Trp1181 form the BRCT 3 domain.

The protein is BRCT domain-containing protein At4g02110 of Arabidopsis thaliana (Mouse-ear cress).